The following is a 510-amino-acid chain: Light-independent protochlorophyllide reductase subunit B (510 aa).

Asp36 contributes to the [4Fe-4S] cluster binding site. The Proton donor role is filled by Asp297. 432-433 (GM) provides a ligand contact to substrate.

Belongs to the ChlB/BchB/BchZ family. In terms of assembly, protochlorophyllide reductase is composed of three subunits; ChlL, ChlN and ChlB. Forms a heterotetramer of two ChlB and two ChlN subunits. The cofactor is [4Fe-4S] cluster.

It is found in the plastid. It localises to the chloroplast. The catalysed reaction is chlorophyllide a + oxidized 2[4Fe-4S]-[ferredoxin] + 2 ADP + 2 phosphate = protochlorophyllide a + reduced 2[4Fe-4S]-[ferredoxin] + 2 ATP + 2 H2O. It functions in the pathway porphyrin-containing compound metabolism; chlorophyll biosynthesis (light-independent). Component of the dark-operative protochlorophyllide reductase (DPOR) that uses Mg-ATP and reduced ferredoxin to reduce ring D of protochlorophyllide (Pchlide) to form chlorophyllide a (Chlide). This reaction is light-independent. The NB-protein (ChlN-ChlB) is the catalytic component of the complex. This Pinus koraiensis (Korean pine) protein is Light-independent protochlorophyllide reductase subunit B.